A 111-amino-acid chain; its full sequence is Small ribosomal subunit protein bS16 (111 aa).

The disordered stretch occupies residues 92-111 (MDVKAKNRKARSSKQEAKEA).

Belongs to the bacterial ribosomal protein bS16 family.

This Rickettsia akari (strain Hartford) protein is Small ribosomal subunit protein bS16.